A 354-amino-acid chain; its full sequence is Adenine deaminase (354 aa).

Positions 19, 21, and 211 each coordinate Zn(2+). Catalysis depends on Glu214, which acts as the Proton donor. Asp291 provides a ligand contact to Zn(2+). Substrate is bound at residue Asp292.

The protein belongs to the metallo-dependent hydrolases superfamily. Adenosine and AMP deaminases family. Adenine deaminase type 2 subfamily. Requires Zn(2+) as cofactor.

It is found in the cytoplasm. Its subcellular location is the nucleus. The catalysed reaction is adenine + H2O + H(+) = hypoxanthine + NH4(+). Functionally, catalyzes the hydrolytic deamination of adenine to hypoxanthine. Plays an important role in the purine salvage pathway and in nitrogen catabolism. The polypeptide is Adenine deaminase (aah1) (Aspergillus fumigatus (strain ATCC MYA-4609 / CBS 101355 / FGSC A1100 / Af293) (Neosartorya fumigata)).